Consider the following 211-residue polypeptide: 3,4-dihydroxy-2-butanone 4-phosphate synthase (211 aa).

D-ribulose 5-phosphate is bound by residues Arg37 to Glu38, Asp42, Arg150 to Thr154, and Glu174. Mg(2+) is bound at residue Glu38. His153 provides a ligand contact to Mg(2+).

It belongs to the DHBP synthase family. As to quaternary structure, homodimer. Requires Mg(2+) as cofactor. The cofactor is Mn(2+).

The enzyme catalyses D-ribulose 5-phosphate = (2S)-2-hydroxy-3-oxobutyl phosphate + formate + H(+). Its pathway is cofactor biosynthesis; riboflavin biosynthesis; 2-hydroxy-3-oxobutyl phosphate from D-ribulose 5-phosphate: step 1/1. Its function is as follows. Catalyzes the conversion of D-ribulose 5-phosphate to formate and 3,4-dihydroxy-2-butanone 4-phosphate. The polypeptide is 3,4-dihydroxy-2-butanone 4-phosphate synthase (Baumannia cicadellinicola subsp. Homalodisca coagulata).